Consider the following 160-residue polypeptide: Suppressyn (160 aa).

An N-terminal signal peptide occupies residues 1-39 (MACIYPTTFYTSLPTKSLNMGISLTTILILSVAVLLSTA). Positions 137-160 (AKASKPTTPPENRPRHFHSFIQKL) are disordered.

Interacts (secreted) with SLC1A5; mainly at cell surface. As to expression, specifically expressed in placenta by extravillous trophoblasts and syncytiotrophoblasts (at protein level).

It is found in the secreted. Functionally, may play a role in trophoblasts syncytialization, the spontaneous fusion of their plasma membranes, an essential process in placental development. May negatively regulate cell-cell fusion by interacting with SLC1A5, the probable receptor on the cell surface of the fusogenic syncytin-1/ERVW-1. The polypeptide is Suppressyn (ERVH48-1) (Homo sapiens (Human)).